We begin with the raw amino-acid sequence, 416 residues long: D-amino acid dehydrogenase 2 (416 aa).

Residue 3-17 (ITVLGAGVVGTAAAY) participates in FAD binding.

Belongs to the DadA oxidoreductase family. Requires FAD as cofactor.

The catalysed reaction is a D-alpha-amino acid + A + H2O = a 2-oxocarboxylate + AH2 + NH4(+). Oxidative deamination of D-amino acids. The chain is D-amino acid dehydrogenase 2 (dadA2) from Mesorhizobium japonicum (strain LMG 29417 / CECT 9101 / MAFF 303099) (Mesorhizobium loti (strain MAFF 303099)).